A 134-amino-acid polypeptide reads, in one-letter code: Profilin-1 (134 aa).

Residues Cys-13 and Cys-118 are joined by a disulfide bond. The short motif at Ala-84–Thr-100 is the Involved in PIP2 interaction element. A Phosphothreonine modification is found at Thr-114.

This sequence belongs to the profilin family. As to quaternary structure, occurs in many kinds of cells as a complex with monomeric actin in a 1:1 ratio. Post-translationally, phosphorylated by MAP kinases.

The protein resides in the cytoplasm. Its subcellular location is the cytoskeleton. Its function is as follows. Binds to actin and affects the structure of the cytoskeleton. At high concentrations, profilin prevents the polymerization of actin, whereas it enhances it at low concentrations. This is Profilin-1 from Olea europaea (Common olive).